A 140-amino-acid chain; its full sequence is MAKQIIVTDSTSDLSHEYLKQHNIHVIPLSLTIDGKSYTDQADISSSEYIDHIENDADVKTSQPPIGRFIETYEQLAQDDVEIISIHLSSGLSGTYNTAVQASHMVDGNITVIDSKSISFGLGYQIKQIVELVLLQSKKI.

The DegV domain maps to 4–140; the sequence is QIIVTDSTSD…ELVLLQSKKI (137 aa). Hexadecanoate is bound by residues T61 and S93.

In terms of biological role, may bind long-chain fatty acids, such as palmitate, and may play a role in lipid transport or fatty acid metabolism. In Staphylococcus aureus, this protein is DegV domain-containing 15.5 kDa protein.